We begin with the raw amino-acid sequence, 274 residues long: Ubiquinone biosynthesis O-methyltransferase, mitochondrial (274 aa).

The transit peptide at 1 to 30 (MNSMNILNKVKNVKSYTRLVRQGFLSQQRN) directs the protein to the mitochondrion. S-adenosyl-L-methionine is bound by residues R65, G88, D109, and M154. Mg(2+)-binding residues include E155, E158, and H159.

The protein belongs to the class I-like SAM-binding methyltransferase superfamily. UbiG/COQ3 family. As to quaternary structure, component of a multi-subunit COQ enzyme complex, composed of at least coq3, coq4, coq5, coq6, coq7 and coq9. Mg(2+) serves as cofactor.

It localises to the mitochondrion inner membrane. The catalysed reaction is 3,4-dihydroxy-5-(all-trans-decaprenyl)benzoate + S-adenosyl-L-methionine = 4-hydroxy-3-methoxy-5-(all-trans-decaprenyl)benzoate + S-adenosyl-L-homocysteine + H(+). It catalyses the reaction a 3-demethylubiquinone + S-adenosyl-L-methionine = a ubiquinone + S-adenosyl-L-homocysteine. It carries out the reaction 3-demethylubiquinol-10 + S-adenosyl-L-methionine = ubiquinol-10 + S-adenosyl-L-homocysteine + H(+). It functions in the pathway cofactor biosynthesis; ubiquinone biosynthesis. Its function is as follows. O-methyltransferase required for two non-consecutive steps during ubiquinone biosynthesis. Catalyzes the 2 O-methylation of 3,4-dihydroxy-5-(all-trans-decaprenyl)benzoic acid into 4-hydroxy-3-methoxy-5-(all-trans-decaprenyl)benzoic acid. Also catalyzes the last step of ubiquinone biosynthesis by mediating methylation of 3-demethylubiquinone into ubiquinone. Also able to mediate the methylation of 3-demethylubiquinol-10 into ubiquinol-10. The chain is Ubiquinone biosynthesis O-methyltransferase, mitochondrial from Schizosaccharomyces pombe (strain 972 / ATCC 24843) (Fission yeast).